We begin with the raw amino-acid sequence, 104 residues long: Glutaredoxin 1 (104 aa).

The region spanning 1 to 96 (MNKSILHTII…KLLETQPKNK (96 aa)) is the Glutaredoxin domain. Cys-17 and Cys-20 are disulfide-bonded.

The protein belongs to the glutaredoxin family. Monomer.

The protein localises to the cytoplasm. Its function is as follows. Has a glutathione-disulfide oxidoreductase activity in the presence of NADPH and glutathione reductase. Reduces low molecular weight disulfides and proteins. The polypeptide is Glutaredoxin 1 (grxC1) (Rickettsia typhi (strain ATCC VR-144 / Wilmington)).